Reading from the N-terminus, the 131-residue chain is MAASLPHPKIVKKHTKKFKRHHSDRYHRVAENWRKQKGIDSVVRRRFRGQISEPTIGYGSNKKTRFMTPSGHKTYLVSNIKDLEVLMMHTKTYAAEIASNVSSKNRVSILARAKALGIKVTNPKGRLALEA.

This sequence belongs to the eukaryotic ribosomal protein eL32 family.

The chain is Large ribosomal subunit protein eL32 (RPL32) from Eremothecium gossypii (strain ATCC 10895 / CBS 109.51 / FGSC 9923 / NRRL Y-1056) (Yeast).